Here is a 363-residue protein sequence, read N- to C-terminus: Ribosome-binding ATPase YchF (363 aa).

One can recognise an OBG-type G domain in the interval 3-256 (FKCGIVGLPN…LDDEEKVEFL (254 aa)). An ATP-binding site is contributed by 12–17 (NVGKST). Mg(2+) is bound by residues S16 and T36. The TGS domain maps to 278 to 361 (NLQTYFTAGV…QDGDVMHFRF (84 aa)).

The cofactor is Mg(2+).

Functionally, ATPase that binds to both the 70S ribosome and the 50S ribosomal subunit in a nucleotide-independent manner. Does not hydrolyze GTP. In Haemophilus influenzae (strain ATCC 51907 / DSM 11121 / KW20 / Rd), this protein is Ribosome-binding ATPase YchF.